The following is a 470-amino-acid chain: ADAM DEC1 (470 aa).

Residues 1-30 (MLRGISQLPAVATMSWVLLPVLWLIVQTQA) form the signal peptide. A propeptide spanning residues 31–205 (IAIKQTPELT…QGPIRISRSL (175 aa)) is cleaved from the precursor. N-linked (GlcNAc...) asparagine glycosylation is present at Asn61. Residues 173 to 200 (FTSNQEEQDPANHTCGVKSTDGKQGPIR) form a disordered region. A glycan (N-linked (GlcNAc...) (complex) asparagine) is linked at Asn184. A Peptidase M12B domain is found at 218-412 (KYIDLYLVLD…QKPKCLLQAP (195 aa)). An N-linked (GlcNAc...) asparagine glycan is attached at Asn237. 2 cysteine pairs are disulfide-bonded: Cys328–Cys407 and Cys369–Cys374. Zn(2+) is bound at residue His352. The active site involves Glu353. 2 residues coordinate Zn(2+): His356 and Asp362. One can recognise a Disintegrin domain in the interval 420–470 (TPVCGNHLLEVGEDCDCGSPKECTNLCCEALTCKLKPGTDCGGDAPNHTTE). N-linked (GlcNAc...) asparagine glycosylation occurs at Asn466.

Zn(2+) serves as cofactor. As to expression, expressed highly in the small intestine and appendix, moderately in lymph node, mucosal lining of the colon, thymus, spleen and very weakly in the bone marrow. Predominantly expressed in dendritic cells (DC) of the germinal center. Weakly expressed in monocyte and highly expressed in macrophage. Absent in immature DC.

Its subcellular location is the secreted. May play an important role in the control of the immune response and during pregnancy. The protein is ADAM DEC1 (ADAMDEC1) of Homo sapiens (Human).